We begin with the raw amino-acid sequence, 144 residues long: Large ribosomal subunit protein uL15 (144 aa).

The interval 1 to 48 is disordered; sequence MIKLESLQDPSPRKRRTKLLGRGPSSGHGKTSCRGHKGDGSRSGYKRR.

The protein belongs to the universal ribosomal protein uL15 family. Part of the 50S ribosomal subunit.

Binds to the 23S rRNA. The protein is Large ribosomal subunit protein uL15 of Chlamydia abortus (strain DSM 27085 / S26/3) (Chlamydophila abortus).